Reading from the N-terminus, the 470-residue chain is 5-hydroxytryptamine receptor 2A (470 aa).

Residues 1–23 (MDVLFEDNAPLSPTTSSLMPSNG) are disordered. Topologically, residues 1–80 (MDVLFEDNAP…LQEKNWSALL (80 aa)) are extracellular. A compositionally biased stretch (low complexity) spans 10–21 (PLSPTTSSLMPS). 4 N-linked (GlcNAc...) asparagine glycosylation sites follow: Asn38, Asn44, Asn51, and Asn54. A helical transmembrane segment spans residues 81 to 97 (TAVVIILTIAGNILVIM). Topologically, residues 98–111 (AVSLEKKLQNATNY) are cytoplasmic. The helical transmembrane segment at 112-137 (FLMSLAIADMLLGFLVMPVSMLTILY) threads the bilayer. Residues 138 to 146 (GYRWPLPSK) lie on the Extracellular side of the membrane. The chain crosses the membrane as a helical span at residues 147–171 (LCAVWIYLDVLFSTASIMHLCAISL). Cys148 and Cys227 are joined by a disulfide. Asp155 is a binding site for serotonin. The DRY motif; important for ligand-induced conformation changes signature appears at 172–174 (DRY). Residues 172–191 (DRYVAIQNPIHHSRFNSRTK) lie on the Cytoplasmic side of the membrane. A helical transmembrane segment spans residues 192–215 (AFLKIIAVWTISVGISMPIPVFGL). The Extracellular portion of the chain corresponds to 216-232 (QDDSKVFKEGSCLLADD). The chain crosses the membrane as a helical span at residues 233–258 (NFVLIGSFVSFFIPLTIMVITYFLTI). Residues 259–321 (KSLQKEATLC…QSISNEQKAC (63 aa)) lie on the Cytoplasmic side of the membrane. Ser280 bears the Phosphoserine mark. The chain crosses the membrane as a helical span at residues 322-347 (KVLGIVFFLFVVMWCPFFITNIMAVI). Residue Asn342 coordinates serotonin. A disulfide bridge connects residues Cys348 and Cys352. Over 348 to 355 (CKESCNED) the chain is Extracellular. The helical transmembrane segment at 356 to 381 (IIGALLNVFVWIGYLSSAVNPLVYTL) threads the bilayer. The short motif at 375 to 379 (NPLVY) is the NPxxY motif; important for ligand-induced conformation changes and signaling element. Residues 382–470 (FNKTYRSAFS…NTVNEKVSCV (89 aa)) lie on the Cytoplasmic side of the membrane. Positions 468-470 (SCV) match the PDZ-binding motif.

Belongs to the G-protein coupled receptor 1 family. Interacts (via C-terminus) with MPDZ and PATJ. May interact (via C-terminus) with MPP3, PRDX6, DLG4, DLG1, CASK, APBA1 and MAGI2. Interacts with GRM2 and DRD2; this may affect signaling. As to expression, ubiquitous.

Its subcellular location is the cell membrane. The protein localises to the cell projection. It is found in the dendrite. The protein resides in the axon. It localises to the cytoplasmic vesicle. Its subcellular location is the membrane. The protein localises to the caveola. It is found in the presynapse. G-protein coupled receptor activity is regulated by lipids: oleamide increases HTR2A-mediated activity. Functionally, G-protein coupled receptor for 5-hydroxytryptamine (serotonin). Also functions as a receptor for various drugs and psychoactive substances, including mescaline, psilocybin, 1-(2,5-dimethoxy-4-iodophenyl)-2-aminopropane (DOI) and lysergic acid diethylamide (LSD). Ligand binding causes a conformation change that triggers signaling via guanine nucleotide-binding proteins (G proteins) and modulates the activity of downstream effectors. HTR2A is coupled to G(q)/G(11) G alpha proteins and activates phospholipase C-beta, releasing diacylglycerol (DAG) and inositol 1,4,5-trisphosphate (IP3) second messengers that modulate the activity of phosphatidylinositol 3-kinase and promote the release of Ca(2+) ions from intracellular stores, respectively. Beta-arrestin family members inhibit signaling via G proteins and mediate activation of alternative signaling pathways. Affects neural activity, perception, cognition and mood. Plays a role in the regulation of behavior, including responses to anxiogenic situations and psychoactive substances. Plays a role in intestinal smooth muscle contraction, and may play a role in arterial vasoconstriction. In Canis lupus familiaris (Dog), this protein is 5-hydroxytryptamine receptor 2A (HTR2A).